The chain runs to 229 residues: Putative N-acetylmannosamine-6-phosphate 2-epimerase (229 aa).

The protein belongs to the NanE family.

It carries out the reaction an N-acyl-D-glucosamine 6-phosphate = an N-acyl-D-mannosamine 6-phosphate. The protein operates within amino-sugar metabolism; N-acetylneuraminate degradation; D-fructose 6-phosphate from N-acetylneuraminate: step 3/5. Converts N-acetylmannosamine-6-phosphate (ManNAc-6-P) to N-acetylglucosamine-6-phosphate (GlcNAc-6-P). This chain is Putative N-acetylmannosamine-6-phosphate 2-epimerase, found in Shigella dysenteriae serotype 1 (strain Sd197).